The sequence spans 382 residues: Saccharopine dehydrogenase [NAD(+), L-lysine-forming] (382 aa).

2 residues coordinate L-saccharopine: R20 and K79. The active-site Proton acceptor is the K79. H98 serves as the catalytic Proton donor. Q103 lines the L-saccharopine pocket. An NAD(+)-binding site is contributed by R132. L-saccharopine-binding residues include R133 and F137. NAD(+) contacts are provided by residues 215-216 (GR), D239, T243, Y263, and V290. A disulfide bridge links C217 with C261. Residue 291-293 (SAD) participates in L-saccharopine binding. 330 to 333 (IDHL) contributes to the NAD(+) binding site.

It belongs to the AlaDH/PNT family. In terms of assembly, monomer.

It catalyses the reaction L-saccharopine + NAD(+) + H2O = L-lysine + 2-oxoglutarate + NADH + H(+). Its pathway is amino-acid biosynthesis; L-lysine biosynthesis via AAA pathway; L-lysine from L-alpha-aminoadipate (fungal route): step 3/3. Functionally, catalyzes the NAD(+)-dependent cleavage of saccharopine to L-lysine and 2-oxoglutarate, the final step in the alpha-aminoadipate (AAA) pathway for lysin biosynthesis. This Candida albicans (strain SC5314 / ATCC MYA-2876) (Yeast) protein is Saccharopine dehydrogenase [NAD(+), L-lysine-forming].